Here is a 180-residue protein sequence, read N- to C-terminus: Bifunctional protein PyrR 1 (180 aa).

Substrate contacts are provided by residues 39–40, 103–111, arginine 136, and valine 160; these read TR and DDVLFTGRT. Residues 99 to 111 carry the PRPP-binding motif; it reads VILVDDVLFTGRT.

The protein belongs to the purine/pyrimidine phosphoribosyltransferase family. PyrR subfamily. As to quaternary structure, homodimer and homohexamer; in equilibrium.

It catalyses the reaction UMP + diphosphate = 5-phospho-alpha-D-ribose 1-diphosphate + uracil. Functionally, regulates transcriptional attenuation of the pyrimidine nucleotide (pyr) operon by binding in a uridine-dependent manner to specific sites on pyr mRNA. This disrupts an antiterminator hairpin in the RNA and favors formation of a downstream transcription terminator, leading to a reduced expression of downstream genes. Also displays a weak uracil phosphoribosyltransferase activity which is not physiologically significant. In Lactiplantibacillus plantarum (strain ATCC BAA-793 / NCIMB 8826 / WCFS1) (Lactobacillus plantarum), this protein is Bifunctional protein PyrR 1 (pyrR1).